A 132-amino-acid chain; its full sequence is MDAGEHTKGGSSRGRLVAIGVLECGGRKVSGVVEVGTFKDPGGCPVVYHLMFRPTDLEELGGVMSPEFVKANDIEKIDEDKEYQDESKFVYPPGVTFETVKAADVFQVVWRNPSDTSEILRRLTIHRRPCVI.

It belongs to the UPF0329 family.

This Encephalitozoon cuniculi (strain GB-M1) (Microsporidian parasite) protein is UPF0329 protein ECU07_0050/ECU09_2020.